The following is a 71-amino-acid chain: uncharacterized protein (71 aa).

The signal sequence occupies residues 1–19; sequence MFLFPSLLSSFCITLRSIS.

This is an uncharacterized protein from Pasteurella multocida (strain Pm70).